The following is a 506-amino-acid chain: MKISIKDIFQKPELFYQKKIVLNGWVRNCRYQKKLIFIDLNDGTFLENLQIICKETKTKNIETAAEITEFHENQKVNTKNESPNNINLEKLKEMLQIGASLQVEGILKATNNPQTPFEISAQNVSLLGASDFSYPLQPKKHSKAFLRQISHLRVRTKLFGAVFRIRNTAFFALHSFFQKKGFFHINTPIITANDGEGAGELFQLTTLNLEALPQTKNIPNASKLADETISKNEIDYQKDFFGKKVFLTATGQLEAEAMALGLNKVYTFGPTFRAEKSNTPRHAAEFWMLEPEMAFCNLSQNLKVAQEMLQFVIAKCLEQNYQDIEFLDKTEKNCLIEELKNISEEKEFLTVKYEQALEILQKSNTKFENPLFYGADLATEHEKYLTETHFKKPVFIVDWPKEIKAFYMKNNPDQKTVAAMDLLVPRVGELIGGSQREENLSVLIEKMNQMKIPQKDLEWYLDLRRFGGCIHSGFGLGFERLLIFLTGLDNIRDVIAFPRTYHNLVF.

This sequence belongs to the class-II aminoacyl-tRNA synthetase family. As to quaternary structure, homodimer.

Its subcellular location is the cytoplasm. It catalyses the reaction tRNA(Asn) + L-asparagine + ATP = L-asparaginyl-tRNA(Asn) + AMP + diphosphate + H(+). In Onion yellows phytoplasma (strain OY-M), this protein is Asparagine--tRNA ligase.